A 377-amino-acid polypeptide reads, in one-letter code: S-adenosylmethionine synthase (377 aa).

Residue histidine 14 coordinates ATP. Aspartate 16 contributes to the Mg(2+) binding site. K(+) is bound at residue glutamate 42. Glutamine 98 serves as a coordination point for L-methionine. The interval 98–108 (QSADIALGIDL) is flexible loop. Residues 162 to 164 (DMK), 228 to 229 (RF), aspartate 237, 243 to 244 (RK), alanine 260, and lysine 264 each bind ATP. Residue aspartate 237 participates in L-methionine binding. Lysine 268 is an L-methionine binding site.

This sequence belongs to the AdoMet synthase family. Homotetramer; dimer of dimers. The cofactor is Mg(2+). K(+) serves as cofactor.

It localises to the cytoplasm. The catalysed reaction is L-methionine + ATP + H2O = S-adenosyl-L-methionine + phosphate + diphosphate. Its pathway is amino-acid biosynthesis; S-adenosyl-L-methionine biosynthesis; S-adenosyl-L-methionine from L-methionine: step 1/1. Functionally, catalyzes the formation of S-adenosylmethionine (AdoMet) from methionine and ATP. The overall synthetic reaction is composed of two sequential steps, AdoMet formation and the subsequent tripolyphosphate hydrolysis which occurs prior to release of AdoMet from the enzyme. This Mesoplasma florum (strain ATCC 33453 / NBRC 100688 / NCTC 11704 / L1) (Acholeplasma florum) protein is S-adenosylmethionine synthase.